Here is a 73-residue protein sequence, read N- to C-terminus: Large ribosomal subunit protein bL31 (73 aa).

It belongs to the bacterial ribosomal protein bL31 family. Type A subfamily. As to quaternary structure, part of the 50S ribosomal subunit.

Functionally, binds the 23S rRNA. The sequence is that of Large ribosomal subunit protein bL31 from Rhizobium meliloti (strain 1021) (Ensifer meliloti).